The following is a 787-amino-acid chain: Integrin beta-6 (787 aa).

Positions 1 to 21 are cleaved as a signal peptide; it reads MGIELVCLFLLLLGRNDHVQG. Residues 22–71 form the PSI domain; the sequence is GCAWGGAESCSDCLLTGPHCAWCSQENFTHLSGAGERCDTPANLLAKGCQ. Residues 22–708 lie on the Extracellular side of the membrane; the sequence is GCAWGGAESC…KDCPKPPNIP (687 aa). 19 cysteine pairs are disulfide-bonded: C23-C41, C31-C454, C34-C59, C44-C70, C197-C204, C252-C293, C394-C406, C426-C452, C456-C476, C467-C479, C481-C490, C492-C519, C502-C517, C511-C522, C524-C537, C539-C560, C544-C558, C552-C563, and C565-C574. 2 N-linked (GlcNAc...) asparagine glycosylation sites follow: N48 and N97. The VWFA domain maps to 131–371; sequence YPVDLYYLMD…QLIISAYEEL (241 aa). Mg(2+) is bound by residues D140, S142, and S144. Positions 144, 147, 148, and 179 each coordinate Ca(2+). Positions 235, 237, 239, and 240 each coordinate Ca(2+). E240 is a binding site for Mg(2+). N-linked (GlcNAc...) asparagine glycosylation occurs at N260. The Ca(2+) site is built by D271 and K355. N387 carries N-linked (GlcNAc...) asparagine glycosylation. N-linked (GlcNAc...) asparagine glycosylation is present at N418. 4 consecutive I-EGF domains span residues 456–491, 492–538, 539–575, and 576–615; these read CQREIETNSSKCHNGNGSFQCGVCTCNPGHMGPHCE, CGED…PYCQ, CDNFSCLRHKGLLCGDNGDCDCGECVCRDGWTGEYCN, and CTTNRDSCTSEDGVLCSGRGDCVCGKCVCRNPGASGPTCE. N-linked (GlcNAc...) asparagine glycosylation is found at N463 and N471. N541 is a glycosylation site (N-linked (GlcNAc...) asparagine). Residue N575 is glycosylated (N-linked (GlcNAc...) asparagine). Cystine bridges form between C576/C599, C583/C597, C591/C602, C604/C614, C617/C620, C624/C669, C630/C649, C633/C645, and C677/C701. The helical transmembrane segment at 709–729 threads the bilayer; that stretch reads MIMLGVSLAILLIGVVLLCIW. The tract at residues 730-757 is interaction with HAX1; that stretch reads KLLVSFHDRKEVAKFEAERSKAKWQTGT. The Cytoplasmic segment spans residues 730–787; that stretch reads KLLVSFHDRKEVAKFEAERSKAKWQTGTNPLYRGSTSTFKNVTYKHREKHKAGLSSDG.

The protein belongs to the integrin beta chain family. As to quaternary structure, heterodimer of an alpha and a beta subunit. Interacts with FLNB. Interacts with HAX1. ITGAV:ITGB6 interacts with FBN1. ITGAV:ITGB6 interacts with TGFB1.

It localises to the cell membrane. Its subcellular location is the cell junction. It is found in the focal adhesion. Functionally, integrin alpha-V:beta-6 (ITGAV:ITGB6) is a receptor for fibronectin and cytotactin. It recognizes the sequence R-G-D in its ligands. ITGAV:ITGB6 acts as a receptor for fibrillin-1 (FBN1) and mediates R-G-D-dependent cell adhesion to FBN1. Integrin alpha-V:beta-6 (ITGAV:ITGB6) mediates R-G-D-dependent release of transforming growth factor beta-1 (TGF-beta-1) from regulatory Latency-associated peptide (LAP), thereby playing a key role in TGF-beta-1 activation. The chain is Integrin beta-6 (Itgb6) from Mus musculus (Mouse).